The primary structure comprises 393 residues: S-adenosylmethionine synthase (393 aa).

His-16 is a binding site for ATP. Mg(2+) is bound at residue Asp-18. Glu-44 serves as a coordination point for K(+). 2 residues coordinate L-methionine: Glu-57 and Gln-100. The flexible loop stretch occupies residues 100–110; the sequence is QSNDIAQGVDH. Residues 167-169, 238-239, Asp-247, 253-254, Ala-270, and Lys-274 each bind ATP; these read DAK, RF, and RK. Asp-247 serves as a coordination point for L-methionine. Lys-278 contacts L-methionine.

The protein belongs to the AdoMet synthase family. Homotetramer; dimer of dimers. It depends on Mg(2+) as a cofactor. K(+) is required as a cofactor.

The protein resides in the cytoplasm. It carries out the reaction L-methionine + ATP + H2O = S-adenosyl-L-methionine + phosphate + diphosphate. The protein operates within amino-acid biosynthesis; S-adenosyl-L-methionine biosynthesis; S-adenosyl-L-methionine from L-methionine: step 1/1. In terms of biological role, catalyzes the formation of S-adenosylmethionine (AdoMet) from methionine and ATP. The overall synthetic reaction is composed of two sequential steps, AdoMet formation and the subsequent tripolyphosphate hydrolysis which occurs prior to release of AdoMet from the enzyme. The protein is S-adenosylmethionine synthase of Paracidovorax citrulli (strain AAC00-1) (Acidovorax citrulli).